The sequence spans 196 residues: GTP cyclohydrolase 1 (196 aa).

Positions 84, 87, and 157 each coordinate Zn(2+).

This sequence belongs to the GTP cyclohydrolase I family. As to quaternary structure, toroid-shaped homodecamer, composed of two pentamers of five dimers.

It catalyses the reaction GTP + H2O = 7,8-dihydroneopterin 3'-triphosphate + formate + H(+). It functions in the pathway cofactor biosynthesis; 7,8-dihydroneopterin triphosphate biosynthesis; 7,8-dihydroneopterin triphosphate from GTP: step 1/1. The polypeptide is GTP cyclohydrolase 1 (Corynebacterium glutamicum (strain ATCC 13032 / DSM 20300 / JCM 1318 / BCRC 11384 / CCUG 27702 / LMG 3730 / NBRC 12168 / NCIMB 10025 / NRRL B-2784 / 534)).